The chain runs to 513 residues: ATP synthase subunit alpha (513 aa).

169 to 176 is an ATP binding site; it reads GDRQVGKT.

This sequence belongs to the ATPase alpha/beta chains family. F-type ATPases have 2 components, CF(1) - the catalytic core - and CF(0) - the membrane proton channel. CF(1) has five subunits: alpha(3), beta(3), gamma(1), delta(1), epsilon(1). CF(0) has three main subunits: a(1), b(2) and c(9-12). The alpha and beta chains form an alternating ring which encloses part of the gamma chain. CF(1) is attached to CF(0) by a central stalk formed by the gamma and epsilon chains, while a peripheral stalk is formed by the delta and b chains.

It is found in the cell inner membrane. The catalysed reaction is ATP + H2O + 4 H(+)(in) = ADP + phosphate + 5 H(+)(out). Functionally, produces ATP from ADP in the presence of a proton gradient across the membrane. The alpha chain is a regulatory subunit. This Aeromonas salmonicida (strain A449) protein is ATP synthase subunit alpha.